The sequence spans 145 residues: Cystatin-F (145 aa).

The first 19 residues, 1–19 (MRAAGTLLAFCCLVLSTTG), serve as a signal peptide directing secretion. An N-linked (GlcNAc...) asparagine glycan is attached at asparagine 62. The Secondary area of contact motif lies at 81–85 (QIVKG). The cysteines at positions 99 and 110 are disulfide-linked. Asparagine 115 carries an N-linked (GlcNAc...) asparagine glycan. Cysteine 124 and cysteine 144 are joined by a disulfide.

Belongs to the cystatin family. As to quaternary structure, homodimer; disulfide-linked. As to expression, primarily expressed in peripheral blood cells and spleen.

It localises to the secreted. The protein localises to the cytoplasm. Its function is as follows. Inhibits papain and cathepsin L but with affinities lower than other cystatins. May play a role in immune regulation through inhibition of a unique target in the hematopoietic system. The sequence is that of Cystatin-F (CST7) from Homo sapiens (Human).